The chain runs to 1054 residues: Leucine-rich repeats and immunoglobulin-like domains protein 2 (1054 aa).

Positions 1–39 are cleaved as a signal peptide; the sequence is MAAAPRGIWEQRRLGCGLGPLARLLILAQALRLLPAARA. Residues 40 to 74 form the LRRNT domain; it reads GLCPAPCACRLPLLDCSRRKLPAPSWRALSGPLPS. LRR repeat units follow at residues 75–96, 97–118, 120–141, 144–165, 167–188, 192–213, 215–236, 239–260, 263–284, 287–308, 311–332, 335–356, 359–381, 386–407, and 410–431; these read DISS…LESQ, TLQE…GEPT, NITL…AFEL, ALES…SFPR, SLKY…CFDN, SLLV…VFKL, HLQF…TFQG, SLRS…AFFG, NMEE…WLYG, MLQQ…AWEF, RLSE…AFVG, LLER…VFRF, NLQT…SEAF, SLTK…AFIG, and SLEY…AFSQ. N-linked (GlcNAc...) asparagine glycosylation occurs at Asn90. Asn120 is a glycosylation site (N-linked (GlcNAc...) asparagine). 2 N-linked (GlcNAc...) asparagine glycosylation sites follow: Asn172 and Asn188. An N-linked (GlcNAc...) asparagine glycan is attached at Asn273. Residues Asn440, Asn467, Asn513, Asn570, and Asn588 are each glycosylated (N-linked (GlcNAc...) asparagine). In terms of domain architecture, LRRCT spans 442–493; the sequence is SSLLCDCHLKWLLQWLVDNNFHHSVNVSCAHPEWLAGQSILNVDLKDFVCDD. 3 consecutive Ig-like C2-type domains span residues 497–596, 601–690, and 695–784; these read PQIR…AKLT, PSFL…ASLT, and PSFI…NVIS. Cys518 and Cys579 are oxidised to a cystine. Cysteines 622 and 674 form a disulfide. Asn686 and Asn727 each carry an N-linked (GlcNAc...) asparagine glycan. An intrachain disulfide couples Cys716 to Cys765. Residues 807-827 form a helical membrane-spanning segment; it reads IVIIVVVCCVVGTSLIWVIVI. Tyr905 bears the Phosphotyrosine mark. Asn1024 is a glycosylation site (N-linked (GlcNAc...) asparagine).

Its subcellular location is the cell membrane. It localises to the cytoplasm. The polypeptide is Leucine-rich repeats and immunoglobulin-like domains protein 2 (Lrig2) (Mus musculus (Mouse)).